Here is a 183-residue protein sequence, read N- to C-terminus: Large ribosomal subunit protein uL5 (183 aa).

It belongs to the universal ribosomal protein uL5 family. As to quaternary structure, part of the 50S ribosomal subunit; part of the 5S rRNA/L5/L18/L25 subcomplex. Contacts the 5S rRNA and the P site tRNA. Forms a bridge to the 30S subunit in the 70S ribosome.

Its function is as follows. This is one of the proteins that bind and probably mediate the attachment of the 5S RNA into the large ribosomal subunit, where it forms part of the central protuberance. In the 70S ribosome it contacts protein S13 of the 30S subunit (bridge B1b), connecting the 2 subunits; this bridge is implicated in subunit movement. Contacts the P site tRNA; the 5S rRNA and some of its associated proteins might help stabilize positioning of ribosome-bound tRNAs. This Christiangramia forsetii (strain DSM 17595 / CGMCC 1.15422 / KT0803) (Gramella forsetii) protein is Large ribosomal subunit protein uL5.